We begin with the raw amino-acid sequence, 336 residues long: Acetyl-coenzyme A carboxylase carboxyl transferase subunit beta (336 aa).

A CoA carboxyltransferase N-terminal domain is found at 27–297 (LWTKCESCQG…VAPAPAPAAT (271 aa)). Cys31, Cys34, Cys50, and Cys53 together coordinate Zn(2+). Residues 31-53 (CESCQGILYRPDLERNLEVCPKC) form a C4-type zinc finger. Positions 287 to 336 (SVAPAPAPAATVDPEPESAEPEAPAEEAGPAGAAGDQAGESQDEGDPRNA) are disordered. Residues 300-311 (PEPESAEPEAPA) are compositionally biased toward acidic residues. Residues 312–326 (EEAGPAGAAGDQAGE) are compositionally biased toward low complexity.

It belongs to the AccD/PCCB family. In terms of assembly, acetyl-CoA carboxylase is a heterohexamer composed of biotin carboxyl carrier protein (AccB), biotin carboxylase (AccC) and two subunits each of ACCase subunit alpha (AccA) and ACCase subunit beta (AccD). Zn(2+) serves as cofactor.

The protein resides in the cytoplasm. The enzyme catalyses N(6)-carboxybiotinyl-L-lysyl-[protein] + acetyl-CoA = N(6)-biotinyl-L-lysyl-[protein] + malonyl-CoA. It participates in lipid metabolism; malonyl-CoA biosynthesis; malonyl-CoA from acetyl-CoA: step 1/1. In terms of biological role, component of the acetyl coenzyme A carboxylase (ACC) complex. Biotin carboxylase (BC) catalyzes the carboxylation of biotin on its carrier protein (BCCP) and then the CO(2) group is transferred by the transcarboxylase to acetyl-CoA to form malonyl-CoA. In Halorhodospira halophila (strain DSM 244 / SL1) (Ectothiorhodospira halophila (strain DSM 244 / SL1)), this protein is Acetyl-coenzyme A carboxylase carboxyl transferase subunit beta.